We begin with the raw amino-acid sequence, 700 residues long: MITFVDSAAKERERESDKCLDPQLWHACAGGMVQMPPVSSKVYYFPQGHAEHAQGHGPVEFPGGRVPALVLCRVAGVRFMADPDTDEVFAKIRLVPVRANEQGYAGDADDGIGAAAAAAAQEEKPASFAKTLTQSDANNGGGFSVPRYCAETIFPRLDYSADPPVQTVLAKDVHGVVWKFRHIYRGTPRRHLLTTGWSTFVNQKKLVAGDSIVFMRTENGDLCVGIRRAKKGGVGGPEFLPPPPPPPPTPAAGGNYGGFSMFLRGDDDGNKMAAAARGKVRARVRPEEVVEAANLAVSGQPFEVVYYPRASTPEFCVKAGAVRAAMRTQWFAGMRFKMAFETEDSSRISWFMGTVSAVQVADPIRWPNSPWRLLQVSWDEPDLLQNVKRVSPWLVELVSNMPAIHLAPFSPPRKKLCVPLYPELPIDGQFPTPMFHGNPLARGVGPMCYFPDGTPAGIQGARHAQFGISLSDLHLNKLQSSLSPHGLHQLDHGMQPRIAAGLIIGHPAARDDISCLLTIGSPQNNKKSDGKKAPAQLMLFGKPILTEQQISLGDAASVDVKKSSSDGNAENTVNKSNSDVSSPRSNQNGTTDNLSCGGVPLCQDNKVLDVGLETGHCKVFMQSEDVGRTLDLSVVGSYEELYRRLADMFGIEKAELMSHVFYRDAAGALKHTGDEPFSEFTKTARRLNILTDTSGDNLAR.

Residues 128-230 (FAKTLTQSDA…DLCVGIRRAK (103 aa)) constitute a DNA-binding region (TF-B3). Disordered stretches follow at residues 234–254 (VGGP…AAGG) and 560–595 (VKKS…DNLS). Pro residues predominate over residues 239-250 (FLPPPPPPPPTP). Polar residues predominate over residues 565 to 594 (SDGNAENTVNKSNSDVSSPRSNQNGTTDNL). Residues 614–697 (TGHCKVFMQS…NILTDTSGDN (84 aa)) form the PB1 domain.

It belongs to the ARF family. Homodimers and heterodimers. Expressed in roots, culms, leaves and young panicles.

It is found in the nucleus. Its function is as follows. Auxin response factors (ARFs) are transcriptional factors that bind specifically to the DNA sequence 5'-TGTCTC-3' found in the auxin-responsive promoter elements (AuxREs). In Oryza sativa subsp. japonica (Rice), this protein is Auxin response factor 18 (ARF18).